Reading from the N-terminus, the 401-residue chain is Tumor necrosis factor receptor superfamily member 11B (401 aa).

The signal sequence occupies residues Met-1 to Gln-21. TNFR-Cys repeat units follow at residues Phe-24–Cys-62, Cys-65–Cys-105, Cys-107–Cys-142, and Cys-145–Cys-185. Intrachain disulfides connect Cys-41–Cys-54, Cys-44–Cys-62, Cys-65–Cys-80, Cys-83–Cys-97, Cys-87–Cys-105, Cys-107–Cys-118, Cys-124–Cys-142, and Cys-145–Cys-160. Residue Asn-98 is glycosylated (N-linked (GlcNAc...) asparagine). Residues Asn-165 and Asn-178 are each glycosylated (N-linked (GlcNAc...) asparagine). The cysteines at positions 166 and 185 are disulfide-linked. 2 consecutive Death domains span residues Asp-198–Lys-269 and Ile-270–Leu-365. A glycan (N-linked (GlcNAc...) asparagine) is linked at Asn-289.

Homodimer. Interacts with TNFSF10 and TNFSF11.

Its subcellular location is the secreted. Its function is as follows. Acts as a decoy receptor for TNFSF11/RANKL and thereby neutralizes its function in osteoclastogenesis. Inhibits the activation of osteoclasts and promotes osteoclast apoptosis in vitro. Bone homeostasis seems to depend on the local ratio between TNFSF11 and TNFRSF11B. May also play a role in preventing arterial calcification. May act as decoy receptor for TNFSF10/TRAIL and protect against apoptosis. TNFSF10/TRAIL binding blocks the inhibition of osteoclastogenesis. This Rattus norvegicus (Rat) protein is Tumor necrosis factor receptor superfamily member 11B (Tnfrsf11b).